Reading from the N-terminus, the 215-residue chain is S-crystallin 4 (215 aa).

A GST N-terminal domain is found at 2 to 80 (PSYTLHYFNH…YLAREFGFHG (79 aa)). Positions 82-215 (NNMDMARVDY…YLQKRSRTEF (134 aa)) constitute a GST C-terminal domain.

Belongs to the GST superfamily. Lens.

In terms of biological role, S-crystallins are structural components of squids and octopi eye lens. Contains relatively little if any GST activity. This Enteroctopus dofleini (North Pacific giant octopus) protein is S-crystallin 4.